A 21-amino-acid chain; its full sequence is DYE-linked aldehyde dehydrogenase, gamma chain (21 aa).

Heterotetramer composed of an alpha, a beta and two gamma chains. The cofactor is [2Fe-2S] cluster.

Active with aldehydes and formate esters as substrates. This is DYE-linked aldehyde dehydrogenase, gamma chain from Amycolatopsis methanolica.